Consider the following 341-residue polypeptide: Anthranilate phosphoribosyltransferase (341 aa).

Residues glycine 80, 83 to 84 (GD), threonine 88, 90 to 93 (NIST), 108 to 116 (KHGNYSVSS), and serine 120 contribute to the 5-phospho-alpha-D-ribose 1-diphosphate site. Position 80 (glycine 80) interacts with anthranilate. Serine 92 is a Mg(2+) binding site. Anthranilate is bound at residue asparagine 111. Residue arginine 166 coordinates anthranilate. Positions 224 and 225 each coordinate Mg(2+).

It belongs to the anthranilate phosphoribosyltransferase family. As to quaternary structure, homodimer. Requires Mg(2+) as cofactor.

The catalysed reaction is N-(5-phospho-beta-D-ribosyl)anthranilate + diphosphate = 5-phospho-alpha-D-ribose 1-diphosphate + anthranilate. It functions in the pathway amino-acid biosynthesis; L-tryptophan biosynthesis; L-tryptophan from chorismate: step 2/5. Its function is as follows. Catalyzes the transfer of the phosphoribosyl group of 5-phosphorylribose-1-pyrophosphate (PRPP) to anthranilate to yield N-(5'-phosphoribosyl)-anthranilate (PRA). The polypeptide is Anthranilate phosphoribosyltransferase (Haloquadratum walsbyi (strain DSM 16790 / HBSQ001)).